The primary structure comprises 540 residues: Chaperonin GroEL (540 aa).

ATP contacts are provided by residues 29–32, 86–90, glycine 413, 476–478, and aspartate 492; these read TLGP, DGTTT, and NAA.

The protein belongs to the chaperonin (HSP60) family. As to quaternary structure, forms a cylinder of 14 subunits composed of two heptameric rings stacked back-to-back. Interacts with the co-chaperonin GroES.

The protein resides in the cytoplasm. The catalysed reaction is ATP + H2O + a folded polypeptide = ADP + phosphate + an unfolded polypeptide.. Together with its co-chaperonin GroES, plays an essential role in assisting protein folding. The GroEL-GroES system forms a nano-cage that allows encapsulation of the non-native substrate proteins and provides a physical environment optimized to promote and accelerate protein folding. The chain is Chaperonin GroEL from Streptococcus sanguinis.